The chain runs to 989 residues: DNA-directed RNA polymerase subunit beta' (989 aa).

Mg(2+) is bound by residues D383, D385, and D387.

It belongs to the RNA polymerase beta' chain family. The RNAP catalytic core consists of 2 alpha, 1 beta, 1 beta' and 1 omega subunit. When a sigma factor is associated with the core the holoenzyme is formed, which can initiate transcription. Mg(2+) is required as a cofactor.

The catalysed reaction is RNA(n) + a ribonucleoside 5'-triphosphate = RNA(n+1) + diphosphate. Functionally, DNA-dependent RNA polymerase catalyzes the transcription of DNA into RNA using the four ribonucleoside triphosphates as substrates. This is DNA-directed RNA polymerase subunit beta' (rpoC) from Leuconostoc pseudomesenteroides.